A 199-amino-acid polypeptide reads, in one-letter code: MISGPNCLRVGQLAPDFSATAVYDQEFKTLKLSDLKNKYIVLFFYPLDFTFVCPTEITAFSDKYNAFSELNTEVLGVSVDSEYSHLAWLQTDRESGGLGDLSYPLVSDLKKEISAAYNVLNSDGVALRGLFIIDPKGIIQYSTINNLEFGRSVEETLRVLQAIQYVQSHPDEVCPANWKPGDKTMNPDPIKSKNYFAAA.

Residues 8 to 165 form the Thioredoxin domain; sequence LRVGQLAPDF…TLRVLQAIQY (158 aa). Cysteine 53 acts as the Cysteine sulfenic acid (-SOH) intermediate in catalysis.

It belongs to the peroxiredoxin family. AhpC/Prx1 subfamily. As to quaternary structure, homodimer; disulfide-linked, upon oxidation. The Cys-53-SH group is the primary site of oxidation by H(2)O(2), and the oxidized Cys-53 (probably Cys-SOH) rapidly reacts with Cys-174-SH of the other subunit to form an intermolecular disulfide. This disulfide is subsequently reduced by thioredoxin.

Its subcellular location is the plastid. The protein resides in the chloroplast. It catalyses the reaction a hydroperoxide + [thioredoxin]-dithiol = an alcohol + [thioredoxin]-disulfide + H2O. Its function is as follows. Thiol-specific peroxidase that catalyzes the reduction of hydrogen peroxide and organic hydroperoxides to water and alcohols, respectively. Plays a role in cell protection against oxidative stress by detoxifying peroxides. The protein is Putative peroxiredoxin ycf42 (ycf42) of Pyropia yezoensis (Susabi-nori).